The primary structure comprises 842 residues: Unconventional myosin-Ia (842 aa).

In terms of domain architecture, Myosin motor spans 1 to 686; sequence GVEDLILLEP…TLFYLEEQRR (686 aa). 93–100 lines the ATP pocket; that stretch reads GESGAGKT. Residues 563–585 are actin-binding; that stretch reads VAILMKNLYSKNPNYIRCIKPND. IQ domains lie at 689 to 712, 713 to 733, and 735 to 764; these read LQQL…YQQM, RKSQ…KHYG, and IRSS…SGAR.

This sequence belongs to the TRAFAC class myosin-kinesin ATPase superfamily. Myosin family. Post-translationally, phosphorylated by ALPK1.

In terms of biological role, involved in directing the movement of organelles along actin filaments. This is Unconventional myosin-Ia (Myo1a) from Rattus norvegicus (Rat).